A 242-amino-acid polypeptide reads, in one-letter code: Ubiquinone biosynthesis O-methyltransferase (242 aa).

S-adenosyl-L-methionine is bound by residues Arg44, Gly64, Asp85, and Met129.

The protein belongs to the methyltransferase superfamily. UbiG/COQ3 family.

The enzyme catalyses a 3-demethylubiquinol + S-adenosyl-L-methionine = a ubiquinol + S-adenosyl-L-homocysteine + H(+). It carries out the reaction a 3-(all-trans-polyprenyl)benzene-1,2-diol + S-adenosyl-L-methionine = a 2-methoxy-6-(all-trans-polyprenyl)phenol + S-adenosyl-L-homocysteine + H(+). It functions in the pathway cofactor biosynthesis; ubiquinone biosynthesis. O-methyltransferase that catalyzes the 2 O-methylation steps in the ubiquinone biosynthetic pathway. In Salmonella typhi, this protein is Ubiquinone biosynthesis O-methyltransferase.